The chain runs to 207 residues: Small ribosomal subunit protein uS4c (207 aa).

Positions 92-153 (MRLDNILFRL…PKTYQSILSK (62 aa)) constitute an S4 RNA-binding domain.

Belongs to the universal ribosomal protein uS4 family. As to quaternary structure, part of the 30S ribosomal subunit. Contacts protein S5. The interaction surface between S4 and S5 is involved in control of translational fidelity.

The protein resides in the plastid. It is found in the chloroplast. One of the primary rRNA binding proteins, it binds directly to 16S rRNA where it nucleates assembly of the body of the 30S subunit. In terms of biological role, with S5 and S12 plays an important role in translational accuracy. This Equisetum hyemale (Dutch rush) protein is Small ribosomal subunit protein uS4c (rps4).